Consider the following 290-residue polypeptide: Barley B recombinant-like protein C (290 aa).

Disordered stretches follow at residues 60–90 and 102–183; these read PHHHHQPHHPRDCGTNANANGNGNGVGYGMM and QPEP…RKNI. The span at 104–116 shows a compositional bias: pro residues; sequence EPQPQLQHPPSPP. Over residues 138–158 the composition is skewed to basic residues; the sequence is PPKKRQQGRQPKVLRPKKPKK.

Belongs to the BBR/BPC family.

It localises to the nucleus. Functionally, transcriptional regulator that specifically binds to GA-rich elements (GAGA-repeats) present in regulatory sequences of genes involved in developmental processes. The polypeptide is Barley B recombinant-like protein C (Oryza sativa subsp. japonica (Rice)).